Reading from the N-terminus, the 346-residue chain is Uroporphyrinogen decarboxylase (346 aa).

Substrate contacts are provided by residues 21 to 25 (RQAGR), F40, D71, Y146, S201, and H316.

Belongs to the uroporphyrinogen decarboxylase family. Homodimer.

The protein resides in the cytoplasm. It catalyses the reaction uroporphyrinogen III + 4 H(+) = coproporphyrinogen III + 4 CO2. Its pathway is porphyrin-containing compound metabolism; protoporphyrin-IX biosynthesis; coproporphyrinogen-III from 5-aminolevulinate: step 4/4. In terms of biological role, catalyzes the decarboxylation of four acetate groups of uroporphyrinogen-III to yield coproporphyrinogen-III. This chain is Uroporphyrinogen decarboxylase, found in Rickettsia felis (strain ATCC VR-1525 / URRWXCal2) (Rickettsia azadi).